A 184-amino-acid chain; its full sequence is Prolyl-tRNA synthetase associated domain-containing protein 1 (184 aa).

It belongs to the PRORSD1 family.

This chain is Prolyl-tRNA synthetase associated domain-containing protein 1 (Prorsd1), found in Danio rerio (Zebrafish).